The following is a 195-amino-acid chain: Probable GTP-binding protein EngB (195 aa).

Residues 22–194 (LKGEVAFVGR…LDLISTLLKE (173 aa)) enclose the EngB-type G domain. Residues 30–37 (GRSNVGKS), 56–60 (GKTRS), 74–77 (DLPG), 141–144 (TKMD), and 173–175 (TSS) contribute to the GTP site. Residues Ser37 and Thr58 each coordinate Mg(2+).

It belongs to the TRAFAC class TrmE-Era-EngA-EngB-Septin-like GTPase superfamily. EngB GTPase family. It depends on Mg(2+) as a cofactor.

In terms of biological role, necessary for normal cell division and for the maintenance of normal septation. In Thermotoga petrophila (strain ATCC BAA-488 / DSM 13995 / JCM 10881 / RKU-1), this protein is Probable GTP-binding protein EngB.